The primary structure comprises 604 residues: Elongation factor 4 (604 aa).

The tr-type G domain maps to 2–184 (DHIRNFSIIA…AVITRMPAPR (183 aa)). GTP-binding positions include 14-19 (DHGKST) and 131-134 (NKMD).

The protein belongs to the TRAFAC class translation factor GTPase superfamily. Classic translation factor GTPase family. LepA subfamily.

It localises to the cell inner membrane. It carries out the reaction GTP + H2O = GDP + phosphate + H(+). In terms of biological role, required for accurate and efficient protein synthesis under certain stress conditions. May act as a fidelity factor of the translation reaction, by catalyzing a one-codon backward translocation of tRNAs on improperly translocated ribosomes. Back-translocation proceeds from a post-translocation (POST) complex to a pre-translocation (PRE) complex, thus giving elongation factor G a second chance to translocate the tRNAs correctly. Binds to ribosomes in a GTP-dependent manner. This is Elongation factor 4 from Methylibium petroleiphilum (strain ATCC BAA-1232 / LMG 22953 / PM1).